The sequence spans 320 residues: Melanocyte-stimulating hormone receptor (320 aa).

Residues 1 to 40 are Extracellular-facing; it reads MPVLGPERRLLASLSSAPPAAPRLGLAANQTNQTGPQCLE. The N-linked (GlcNAc...) asparagine glycan is linked to Asn32. A helical membrane pass occupies residues 41–66; it reads VSIPDGLFLSLGLVSLVENVLVVAAI. Over 67 to 75 the chain is Cytoplasmic; that stretch reads AKNRNLHSP. Residues 76 to 96 form a helical membrane-spanning segment; the sequence is MYYFVCCLAVSDLLVSVSNVL. The Extracellular portion of the chain corresponds to 97–121; it reads ETAVLLLLEAGALAAQAAVVQQLDN. A helical transmembrane segment spans residues 122-143; that stretch reads VMDVLICGSMVSSLCFLGAIAV. Residues 144 to 166 are Cytoplasmic-facing; sequence DRYVSIFYALRYHSIVTLPRAGR. Residues 167–186 traverse the membrane as a helical segment; sequence AIAAIWAGSVLSSTLFIAYY. The Extracellular segment spans residues 187–194; sequence HHTAVLLG. The chain crosses the membrane as a helical span at residues 195–214; it reads LVSFFVAMLALMAVLYVHML. Over 215 to 243 the chain is Cytoplasmic; it reads ARACQHGRHIARLHKTQHPTRQGCGLKGA. Residues 244–269 traverse the membrane as a helical segment; the sequence is ATLTILLGVFLLCWAPFFLHLSLVVL. The Extracellular segment spans residues 270–282; sequence CPQHPTCGCVFKN. A helical membrane pass occupies residues 283–303; it reads VNLFLALVICNSIVDPLIYAF. The Cytoplasmic portion of the chain corresponds to 304–320; it reads RSQELRKTLQEVLQCSW.

The protein belongs to the G-protein coupled receptor 1 family. As to quaternary structure, interacts with MGRN1, but does not undergo MGRN1-mediated ubiquitination; this interaction competes with GNAS-binding and thus inhibits agonist-induced cAMP production. Interacts with OPN3; the interaction results in a decrease in MC1R-mediated cAMP signaling and ultimately a decrease in melanin production in melanocytes.

Its subcellular location is the cell membrane. Functionally, receptor for MSH (alpha, beta and gamma) and ACTH. The activity of this receptor is mediated by G proteins which activate adenylate cyclase. Mediates melanogenesis, the production of eumelanin (black/brown) and phaeomelanin (red/yellow), via regulation of cAMP signaling in melanocytes. This chain is Melanocyte-stimulating hormone receptor (MC1R), found in Sus scrofa (Pig).